We begin with the raw amino-acid sequence, 324 residues long: Pepsin-2B (324 aa).

In terms of domain architecture, Peptidase A1 spans 14-321; that stretch reads YYGVISIGTP…DRTNNKVGFA (308 aa). Asp-32 is an active-site residue. Cysteines 45 and 50 form a disulfide. The disordered stretch occupies residues 86–109; sequence QDTVSVGGGSDPNQELGESQTEPG. The span at 96–107 shows a compositional bias: polar residues; that stretch reads DPNQELGESQTE. The cysteines at positions 206 and 209 are disulfide-linked. Residue Asp-214 is part of the active site. The cysteines at positions 247 and 280 are disulfide-linked.

Belongs to the peptidase A1 family.

This is Pepsin-2B from Gadus morhua (Atlantic cod).